The following is a 151-amino-acid chain: 16.9 kDa class I heat shock protein 1 (151 aa).

The region spanning 37 to 151 (ETAAFANARV…PEVKAIEISG (115 aa)) is the sHSP domain.

The protein belongs to the small heat shock protein (HSP20) family. As to quaternary structure, may form oligomeric structures.

The protein resides in the cytoplasm. This is 16.9 kDa class I heat shock protein 1 (hsp16.9A) from Triticum aestivum (Wheat).